Here is an 82-residue protein sequence, read N- to C-terminus: Small ribosomal subunit protein bS18 (82 aa).

A disordered region spans residues 1–20 (MVDINQIPTRRPFHRRRKTC).

The protein belongs to the bacterial ribosomal protein bS18 family. As to quaternary structure, part of the 30S ribosomal subunit. Forms a tight heterodimer with protein bS6.

In terms of biological role, binds as a heterodimer with protein bS6 to the central domain of the 16S rRNA, where it helps stabilize the platform of the 30S subunit. This chain is Small ribosomal subunit protein bS18, found in Brucella anthropi (strain ATCC 49188 / DSM 6882 / CCUG 24695 / JCM 21032 / LMG 3331 / NBRC 15819 / NCTC 12168 / Alc 37) (Ochrobactrum anthropi).